Here is a 320-residue protein sequence, read N- to C-terminus: Cytochrome f (320 aa).

The N-terminal stretch at 1–35 (MQTRKTLSWIKEEITRSISVSLMIYIITGAYISNA) is a signal peptide. Heme-binding residues include Tyr36, Cys56, Cys59, and His60. A helical membrane pass occupies residues 286-306 (VQGLLFFLASVILAQIFLVLK).

Belongs to the cytochrome f family. In terms of assembly, the 4 large subunits of the cytochrome b6-f complex are cytochrome b6, subunit IV (17 kDa polypeptide, petD), cytochrome f and the Rieske protein, while the 4 small subunits are PetG, PetL, PetM and PetN. The complex functions as a dimer. The cofactor is heme.

It localises to the plastid. The protein resides in the chloroplast thylakoid membrane. Component of the cytochrome b6-f complex, which mediates electron transfer between photosystem II (PSII) and photosystem I (PSI), cyclic electron flow around PSI, and state transitions. This chain is Cytochrome f, found in Populus alba (White poplar).